A 193-amino-acid chain; its full sequence is Imidazoleglycerol-phosphate dehydratase (193 aa).

The protein belongs to the imidazoleglycerol-phosphate dehydratase family.

Its subcellular location is the cytoplasm. The catalysed reaction is D-erythro-1-(imidazol-4-yl)glycerol 3-phosphate = 3-(imidazol-4-yl)-2-oxopropyl phosphate + H2O. It functions in the pathway amino-acid biosynthesis; L-histidine biosynthesis; L-histidine from 5-phospho-alpha-D-ribose 1-diphosphate: step 6/9. The chain is Imidazoleglycerol-phosphate dehydratase from Saccharolobus islandicus (strain M.16.27) (Sulfolobus islandicus).